A 190-amino-acid polypeptide reads, in one-letter code: Lipid A acyltransferase PagP (190 aa).

An N-terminal signal peptide occupies residues 1 to 29 (MYVAMIIRKYFLIIALLVMPWLAIPSVSA). Active-site residues include His-62, Asp-105, and Ser-106.

This sequence belongs to the lipid A palmitoyltransferase family. As to quaternary structure, homodimer.

The protein resides in the cell outer membrane. It catalyses the reaction a lipid A + a 1,2-diacyl-sn-glycero-3-phosphocholine = a hepta-acyl lipid A + a 2-acyl-sn-glycero-3-phosphocholine. It carries out the reaction a lipid IVA + a 1,2-diacyl-sn-glycero-3-phosphocholine = a lipid IVB + a 2-acyl-sn-glycero-3-phosphocholine. The enzyme catalyses a lipid IIA + a 1,2-diacyl-sn-glycero-3-phosphocholine = a lipid IIB + a 2-acyl-sn-glycero-3-phosphocholine. Its function is as follows. Transfers a fatty acid residue from the sn-1 position of a phospholipid to the N-linked hydroxyfatty acid chain on the proximal unit of lipid A or its precursors. The polypeptide is Lipid A acyltransferase PagP (Salmonella typhi).